We begin with the raw amino-acid sequence, 483 residues long: Glutamyl-tRNA(Gln) amidotransferase subunit A (483 aa).

Residues Lys-75 and Ser-150 each act as charge relay system in the active site. Ser-174 (acyl-ester intermediate) is an active-site residue.

The protein belongs to the amidase family. GatA subfamily. Heterotrimer of A, B and C subunits.

The enzyme catalyses L-glutamyl-tRNA(Gln) + L-glutamine + ATP + H2O = L-glutaminyl-tRNA(Gln) + L-glutamate + ADP + phosphate + H(+). Functionally, allows the formation of correctly charged Gln-tRNA(Gln) through the transamidation of misacylated Glu-tRNA(Gln) in organisms which lack glutaminyl-tRNA synthetase. The reaction takes place in the presence of glutamine and ATP through an activated gamma-phospho-Glu-tRNA(Gln). The sequence is that of Glutamyl-tRNA(Gln) amidotransferase subunit A from Legionella pneumophila subsp. pneumophila (strain Philadelphia 1 / ATCC 33152 / DSM 7513).